Reading from the N-terminus, the 210-residue chain is Glycerol-3-phosphate acyltransferase 2 (210 aa).

6 helical membrane passes run 4 to 24 (LIMV…PAPY), 52 to 72 (VGFW…ALAM), 73 to 93 (AVAN…LMAI), 114 to 134 (IGIL…CFLI), 141 to 161 (FPTL…WLGQ), and 163 to 183 (DMGK…MYIP).

This sequence belongs to the PlsY family. As to quaternary structure, probably interacts with PlsX.

It is found in the cell membrane. The catalysed reaction is an acyl phosphate + sn-glycerol 3-phosphate = a 1-acyl-sn-glycero-3-phosphate + phosphate. Its pathway is lipid metabolism; phospholipid metabolism. Functionally, catalyzes the transfer of an acyl group from acyl-phosphate (acyl-PO(4)) to glycerol-3-phosphate (G3P) to form lysophosphatidic acid (LPA). This enzyme utilizes acyl-phosphate as fatty acyl donor, but not acyl-CoA or acyl-ACP. The protein is Glycerol-3-phosphate acyltransferase 2 of Dehalococcoides mccartyi (strain CBDB1).